Here is a 126-residue protein sequence, read N- to C-terminus: UPF0102 protein gll3754 (126 aa).

This sequence belongs to the UPF0102 family.

The sequence is that of UPF0102 protein gll3754 from Gloeobacter violaceus (strain ATCC 29082 / PCC 7421).